The sequence spans 109 residues: uncharacterized protein (109 aa).

The disordered stretch occupies residues 67 to 96; sequence YFGNKLWRPTPRSGQSGQSRPKTGPHGSQR. Polar residues predominate over residues 78-87; sequence RSGQSGQSRP.

This is an uncharacterized protein from Saccharomyces cerevisiae (strain ATCC 204508 / S288c) (Baker's yeast).